A 166-amino-acid chain; its full sequence is Mitochondrial fission process protein 1 (166 aa).

Helical transmembrane passes span 34–54 and 78–98; these read SLVP…YVLA and ALAV…IPGF. Residue lysine 123 is modified to N6-succinyllysine. The helical transmembrane segment at 129-149 threads the bilayer; that stretch reads LGLLAIPVIIHPIDRSVDFLL.

Belongs to the MTFP1 family.

It localises to the mitochondrion inner membrane. Functionally, involved in the mitochondrial division probably by regulating membrane fission. Loss-of-function leads to apoptosis. This is Mitochondrial fission process protein 1 (Mtfp1) from Mus musculus (Mouse).